A 605-amino-acid polypeptide reads, in one-letter code: Aspartate--tRNA(Asp/Asn) ligase (605 aa).

E172 contacts L-aspartate. The interval 196–199 (QLFK) is aspartate. R218 contributes to the L-aspartate binding site. ATP is bound by residues 218–220 (RDE) and Q227. Residue H455 coordinates L-aspartate. Position 489 (E489) interacts with ATP. Residue R496 participates in L-aspartate binding. 541-544 (GLDR) is an ATP binding site.

Belongs to the class-II aminoacyl-tRNA synthetase family. Type 1 subfamily. Homodimer.

It localises to the cytoplasm. It carries out the reaction tRNA(Asx) + L-aspartate + ATP = L-aspartyl-tRNA(Asx) + AMP + diphosphate. Its function is as follows. Aspartyl-tRNA synthetase with relaxed tRNA specificity since it is able to aspartylate not only its cognate tRNA(Asp) but also tRNA(Asn). Reaction proceeds in two steps: L-aspartate is first activated by ATP to form Asp-AMP and then transferred to the acceptor end of tRNA(Asp/Asn). The protein is Aspartate--tRNA(Asp/Asn) ligase of Ralstonia nicotianae (strain ATCC BAA-1114 / GMI1000) (Ralstonia solanacearum).